Here is a 321-residue protein sequence, read N- to C-terminus: Protein-L-isoaspartate O-methyltransferase (321 aa).

Basic and acidic residues predominate over residues 21-31; it reads KPAERQREKRI. A disordered region spans residues 21–65; it reads KPAERQREKRISSGVNAVSLPTPARTASAERASSTPAPGPGPQRV. A compositionally biased stretch (low complexity) spans 41–56; sequence PTPARTASAERASSTP. Residue Ser153 is part of the active site.

The protein belongs to the methyltransferase superfamily. L-isoaspartyl/D-aspartyl protein methyltransferase family.

Its subcellular location is the cytoplasm. The enzyme catalyses [protein]-L-isoaspartate + S-adenosyl-L-methionine = [protein]-L-isoaspartate alpha-methyl ester + S-adenosyl-L-homocysteine. Functionally, catalyzes the methyl esterification of L-isoaspartyl residues in peptides and proteins that result from spontaneous decomposition of normal L-aspartyl and L-asparaginyl residues. It plays a role in the repair and/or degradation of damaged proteins. The polypeptide is Protein-L-isoaspartate O-methyltransferase (Ralstonia nicotianae (strain ATCC BAA-1114 / GMI1000) (Ralstonia solanacearum)).